Consider the following 303-residue polypeptide: Uridylate-specific endoribonuclease C (303 aa).

The N-terminal stretch at 1–16 (MVYLVFLCLLPSLISG) is a signal peptide. The 272-residue stretch at 32–303 (TDAEIQSLAE…KRFVASSYPI (272 aa)) folds into the EndoU domain. Active-site residues include His181, His196, and Lys239. An N-linked (GlcNAc...) asparagine glycan is attached at Asn287.

It belongs to the ENDOU family. Monomer. Mn(2+) serves as cofactor.

The protein localises to the secreted. The enzyme catalyses ribonucleotidyl-uridine-RNA = a 5'-end dephospho-uridine-RNA + a 3'-end 2',3'-cyclophospho-ribonucleotide-RNA. In terms of biological role, endoribonuclease that cleaves single-stranded RNAs at 5' of uridylates and releases a product with a 2',3'-cyclic phosphate at the 3'-end. This Xenopus laevis (African clawed frog) protein is Uridylate-specific endoribonuclease C (endou-c).